A 26-amino-acid chain; its full sequence is Mu-theraphotoxin-Phlo2a (26 aa).

3 disulfide bridges follow: C2-C16, C9-C21, and C15-C25.

Belongs to the neurotoxin 30 (phrixotoxin) family. Expressed by the venom gland.

It is found in the secreted. In terms of biological role, gating-modifier toxin that non-selectively inhibits voltage-gated sodium channel Nav by shifting the threshold for channel activation to more positive potentials. This toxin moderately inhibits human Nav1.2/SCN2A (IC(50)=404 nM), Nav1.5/SCN5A (IC(50)=218 nM) and Nav1.7/SCN9A (IC(50)=333 nM). Inhibition of Nav1.7 is voltage-dependent, with lower inhibition at more positive test pulses. The polypeptide is Mu-theraphotoxin-Phlo2a (Phlogius sp. (Tarantula spider)).